We begin with the raw amino-acid sequence, 104 residues long: UPF0213 protein plu4503 (104 aa).

The GIY-YIG domain maps to N4–R79.

It belongs to the UPF0213 family.

The polypeptide is UPF0213 protein plu4503 (Photorhabdus laumondii subsp. laumondii (strain DSM 15139 / CIP 105565 / TT01) (Photorhabdus luminescens subsp. laumondii)).